A 624-amino-acid polypeptide reads, in one-letter code: Steryl-sulfatase (624 aa).

The first 22 residues, 1-22 (MPRPRPLLLAVMAATLADIILA), serve as a signal peptide directing secretion. Over 24–192 (DPAPAGPAPR…GTVFGPALRV (169 aa)) the chain is Lumenal. Residues Asp43 and Asp44 each coordinate Ca(2+). A glycan (N-linked (GlcNAc...) asparagine) is linked at Asn55. Residue Cys83 participates in Ca(2+) binding. The active-site Nucleophile is the Cys83. Cys83 is subject to 3-oxoalanine (Cys). The active site involves His144. Cystine bridges form between Cys149/Cys156 and Cys178/Cys250. Residues 193–216 (FAAGPLAALGASLAAMAAARWAGL) form a helical membrane-spanning segment. Residues 217 to 220 (ARVP) are Cytoplasmic-facing. Residues 221–242 (GWALAGTAAAMLAVGGPRSASC) form a helical membrane-spanning segment. At 243–624 (LGFRPANCFL…ATTRTQATPR (382 aa)) the chain is on the lumenal side. 2 residues coordinate Ca(2+): Asp350 and His351. 2 disulfide bridges follow: Cys454–Cys495 and Cys487–Cys493. An N-linked (GlcNAc...) asparagine glycan is attached at Asn465. The disordered stretch occupies residues 572-624 (GGAGGGAGAQDDSGHAHGDGSHAHDDPGHAQDRGDDDAHYGGHATTRTQATPR). Over residues 583 to 611 (DSGHAHGDGSHAHDDPGHAQDRGDDDAHY) the composition is skewed to basic and acidic residues.

It belongs to the sulfatase family. As to quaternary structure, homodimer. Requires Ca(2+) as cofactor. Post-translationally, the conversion to 3-oxoalanine (also known as C-formylglycine, FGly), of a serine or cysteine residue in prokaryotes and of a cysteine residue in eukaryotes, is critical for catalytic activity.

Its subcellular location is the microsome membrane. It is found in the endoplasmic reticulum membrane. The catalysed reaction is dehydroepiandrosterone 3-sulfate + H2O = 3beta-hydroxyandrost-5-en-17-one + sulfate + H(+). It catalyses the reaction estrone 3-sulfate + H2O = estrone + sulfate + H(+). Its function is as follows. Catalyzes the conversion of sulfated steroid precursors, such as dehydroepiandrosterone sulfate (DHEA-S) and estrone sulfate to the free steroid. The polypeptide is Steryl-sulfatase (Sts) (Mus musculus (Mouse)).